A 356-amino-acid chain; its full sequence is Peptide chain release factor 1 (356 aa).

The residue at position 233 (Q233) is an N5-methylglutamine.

This sequence belongs to the prokaryotic/mitochondrial release factor family. In terms of processing, methylated by PrmC. Methylation increases the termination efficiency of RF1.

Its subcellular location is the cytoplasm. Its function is as follows. Peptide chain release factor 1 directs the termination of translation in response to the peptide chain termination codons UAG and UAA. In Oceanobacillus iheyensis (strain DSM 14371 / CIP 107618 / JCM 11309 / KCTC 3954 / HTE831), this protein is Peptide chain release factor 1.